A 676-amino-acid polypeptide reads, in one-letter code: Pentatricopeptide repeat-containing protein ATP4 homolog, chloroplastic (676 aa).

The transit peptide at 1-73 (MASPSSLLSW…NSPRAAGLAR (73 aa)) directs the protein to the chloroplast. Residues 17–58 (LSFQPKNPSPSPATARVSVQDPPPPPSDANPSPGRSSNTSRY) form a disordered region. PPR repeat units lie at residues 148–182 (EVIL…GVQP), 183–217 (DNAT…GCSP), 218–252 (DMLT…KWQL), 253–287 (DPVI…GVKP), 288–322 (NLVV…EAVP), 323–353 (NKAT…MKDE), 358–388 (DVVL…MKAS), 396–430 (DSWS…GFKP), 431–465 (NIFI…GITP), and 532–566 (RMPY…GIYS). The 85-residue stretch at 578–662 (LHLRGLSVGA…WFLTTSVAAR (85 aa)) folds into the Smr domain.

This sequence belongs to the PPR family. P subfamily.

Its subcellular location is the plastid. It localises to the chloroplast. In terms of biological role, involved in translation and accumulation of chloroplast ATP synthase subunits. This Oryza sativa subsp. japonica (Rice) protein is Pentatricopeptide repeat-containing protein ATP4 homolog, chloroplastic.